Consider the following 69-residue polypeptide: Putative membrane protein insertion efficiency factor (69 aa).

Belongs to the UPF0161 family.

The protein localises to the cell membrane. Its function is as follows. Could be involved in insertion of integral membrane proteins into the membrane. This is Putative membrane protein insertion efficiency factor from Alkaliphilus oremlandii (strain OhILAs) (Clostridium oremlandii (strain OhILAs)).